A 161-amino-acid polypeptide reads, in one-letter code: Allophycocyanin beta subunit (161 aa).

Residue N71 is modified to N4-methylasparagine. C81 contributes to the (2R,3E)-phycocyanobilin binding site.

Belongs to the phycobiliprotein family. As to quaternary structure, heterodimer of an alpha and a beta chain. Post-translationally, contains one covalently linked phycocyanobilin chromophore. The chromophore is added by the phycocyanobilin lyase CpcUS.

The protein resides in the cellular thylakoid membrane. Functionally, light-harvesting photosynthetic bile pigment-protein from the phycobiliprotein complex. Allophycocyanin has a maximum absorption at approximately 650 nanometers. This Picosynechococcus sp. (strain ATCC 27264 / PCC 7002 / PR-6) (Agmenellum quadruplicatum) protein is Allophycocyanin beta subunit (apcB).